Here is a 200-residue protein sequence, read N- to C-terminus: Mediator of RNA polymerase II transcription subunit 8 (200 aa).

This sequence belongs to the Mediator complex subunit 8 family. In terms of assembly, component of the Mediator complex.

It is found in the nucleus. Component of the Mediator complex, a coactivator involved in the regulated transcription of nearly all RNA polymerase II-dependent genes. Mediator functions as a bridge to convey information from gene-specific regulatory proteins to the basal RNA polymerase II transcription machinery. Mediator is recruited to promoters by direct interactions with regulatory proteins and serves as a scaffold for the assembly of a functional preinitiation complex with RNA polymerase II and the general transcription factors. The sequence is that of Mediator of RNA polymerase II transcription subunit 8 (med8) from Schizosaccharomyces pombe (strain 972 / ATCC 24843) (Fission yeast).